The chain runs to 171 residues: MIGILNRWRQFGRRYFWPHLLLGMVAASLGLPTSLNDSQDITSLPNSSSSVSRQNNVSLSLTDLVALKEAHRRSSYSVDYWHQHAIRTVIRHLSFALTTPQTVNAQQADELEPHSLVLLDTLNALLTQDSQYPLVISPRAGRVTFYPQAHHQVGIWLAQIRGIRAGPSLLS.

The first 36 residues, 1–36 (MIGILNRWRQFGRRYFWPHLLLGMVAASLGLPTSLN), serve as a signal peptide directing secretion.

The protein belongs to the SecM family.

Its subcellular location is the cytoplasm. The protein localises to the cytosol. It localises to the periplasm. Its function is as follows. Regulates secA expression by translational coupling of the secM secA operon. Translational pausing at a specific Pro residue 5 residues before the end of the protein may allow disruption of a mRNA repressor helix that normally suppresses secA translation initiation. The polypeptide is Secretion monitor (Pectobacterium carotovorum subsp. carotovorum (strain PC1)).